Here is a 445-residue protein sequence, read N- to C-terminus: UPF0210 protein Ccon26_06850 (445 aa).

It belongs to the UPF0210 family. In terms of assembly, homodimer.

This is UPF0210 protein Ccon26_06850 from Campylobacter concisus (strain 13826).